Here is a 109-residue protein sequence, read N- to C-terminus: MAGDGGRSGPSTPSTSVITKTKPRTKRPNLYRVLILNDDYTPMEFVVHVLEKFFQMDVEAATKVMLHVHHHGIGECGVFTYEIAETKVTQVMDFARKHQHPLQCVMEKK.

The disordered stretch occupies residues Met1–Arg24.

This sequence belongs to the ClpS family. As to quaternary structure, binds to the N-terminal domain of the chaperone ClpA.

Functionally, involved in the modulation of the specificity of the ClpAP-mediated ATP-dependent protein degradation. This Rhodopseudomonas palustris (strain ATCC BAA-98 / CGA009) protein is ATP-dependent Clp protease adapter protein ClpS 2.